The primary structure comprises 150 residues: Dynein light chain Tctex-type protein 2B (150 aa).

The protein belongs to the dynein light chain Tctex-type family.

It localises to the dynein axonemal particle. Its function is as follows. Acts as one of several non-catalytic accessory components of the cytoplasmic dynein 2 complex (dynein-2 complex), a motor protein complex that drives the movement of cargos along microtubules within cilia and flagella in concert with the intraflagellar transport (IFT) system. Required for proper retrograde ciliary transport. The sequence is that of Dynein light chain Tctex-type protein 2B (dynlt2b) from Danio rerio (Zebrafish).